Here is a 337-residue protein sequence, read N- to C-terminus: Protein RETICULATA-RELATED 3, chloroplastic (337 aa).

Residues 1–59 (MAAMAAKLQLSAKSDQSSVRLPRVINLSRDPTTRVSFPRNGSVCSLHTNFSSPHLAKPC) constitute a chloroplast transit peptide. Over residues 70–89 (NNGGGSGSGGGGGGFGGSGG) the composition is skewed to gly residues. Residues 70 to 96 (NNGGGSGSGGGGGGFGGSGGEASEESS) form a disordered region. Transmembrane regions (helical) follow at residues 151–171 (FVFS…YMLA) and 216–236 (VFAS…NGLI).

It belongs to the RETICULATA family. Expressed in root meristem, root vasculature, distal region of young leaf primordia, leaf bundle sheath cells, hydathodes and pollen grains.

Its subcellular location is the plastid. The protein localises to the chloroplast membrane. May play a role in leaf development. Required for leaf mesophyll cell division in the early stages of leaf organogenesis. The protein is Protein RETICULATA-RELATED 3, chloroplastic of Arabidopsis thaliana (Mouse-ear cress).